The primary structure comprises 283 residues: uncharacterized protein (283 aa).

The 128-residue stretch at 4-131 folds into the FAD-binding FR-type domain; sequence RPLHAFEVVA…MGPGGAYAPD (128 aa).

This is an uncharacterized protein from Mycobacterium bovis (strain ATCC BAA-935 / AF2122/97).